A 220-amino-acid chain; its full sequence is Large ribosomal subunit protein bL9 (220 aa).

Residues 167–184 (AAAEVEQAEDVAAAEQQD) are compositionally biased toward low complexity. A disordered region spans residues 167-220 (AAAEVEQAEDVAAAEQQDSSPVDDHADDADGVADGEGRDEGAGDASDEEEMPST). Over residues 211–220 (ASDEEEMPST) the composition is skewed to acidic residues.

The protein belongs to the bacterial ribosomal protein bL9 family.

Its function is as follows. Binds to the 23S rRNA. The chain is Large ribosomal subunit protein bL9 from Anaplasma marginale (strain Florida).